We begin with the raw amino-acid sequence, 258 residues long: Glutamate racemase (258 aa).

Substrate contacts are provided by residues 11–12 (DS) and 43–44 (YG). C74 acts as the Proton donor/acceptor in catalysis. 75–76 (NT) lines the substrate pocket. Catalysis depends on C182, which acts as the Proton donor/acceptor. Residue 183-184 (TH) participates in substrate binding.

This sequence belongs to the aspartate/glutamate racemases family.

The enzyme catalyses L-glutamate = D-glutamate. It participates in cell wall biogenesis; peptidoglycan biosynthesis. In terms of biological role, provides the (R)-glutamate required for cell wall biosynthesis. The protein is Glutamate racemase of Leptospira borgpetersenii serovar Hardjo-bovis (strain JB197).